A 141-amino-acid chain; its full sequence is Nucleoside triphosphatase NudI (141 aa).

The 141-residue stretch at 1–141 folds into the Nudix hydrolase domain; the sequence is MRQRTIVCPL…RKTLRLKGLL (141 aa). A Nudix box motif is present at residues 38–59; that stretch reads GGVEPGERIEEALRREIREELG.

Belongs to the Nudix hydrolase family. NudI subfamily. Monomer. Mg(2+) serves as cofactor.

The enzyme catalyses a ribonucleoside 5'-triphosphate + H2O = a ribonucleoside 5'-phosphate + diphosphate + H(+). It catalyses the reaction a 2'-deoxyribonucleoside 5'-triphosphate + H2O = a 2'-deoxyribonucleoside 5'-phosphate + diphosphate + H(+). The catalysed reaction is dUTP + H2O = dUMP + diphosphate + H(+). It carries out the reaction dTTP + H2O = dTMP + diphosphate + H(+). The enzyme catalyses dCTP + H2O = dCMP + diphosphate + H(+). In terms of biological role, catalyzes the hydrolysis of nucleoside triphosphates, with a preference for pyrimidine deoxynucleoside triphosphates (dUTP, dTTP and dCTP). This chain is Nucleoside triphosphatase NudI, found in Escherichia coli O17:K52:H18 (strain UMN026 / ExPEC).